The following is a 363-amino-acid chain: Cysteine proteinase 15A (363 aa).

The N-terminal stretch at 1 to 18 (MDRRFLFALFLFAAVATA) is a signal peptide. A propeptide spans 19–131 (VTDDTNNDDF…QKAPILPTTN (113 aa)) (activation peptide). 2 cysteine pairs are disulfide-bonded: C153/C203 and C187/C236. C156 is a catalytic residue. N249 carries N-linked (GlcNAc...) asparagine glycosylation. Cysteines 292 and 347 form a disulfide. Residues H299 and N326 contribute to the active site.

Belongs to the peptidase C1 family.

This Pisum sativum (Garden pea) protein is Cysteine proteinase 15A.